We begin with the raw amino-acid sequence, 281 residues long: CCAAT/enhancer-binding protein epsilon (281 aa).

Residues 1 to 30 (MSHGTYYECEPRGGQQPLEFSGGRAGPGEL) are disordered. Lys121 is covalently cross-linked (Glycyl lysine isopeptide (Lys-Gly) (interchain with G-Cter in SUMO2)). Phosphoserine is present on Ser181. Positions 204 to 267 (SLEYRLRRER…DTLRNLFRQI (64 aa)) constitute a bZIP domain. The segment at 208 to 245 (RLRRERNNIAVRKSRDKAKRRIMETQQKVLEYMAENER) is basic motif. A leucine-zipper region spans residues 246 to 267 (LRSRVDQLTQELDTLRNLFRQI).

The protein belongs to the bZIP family. C/EBP subfamily. As to quaternary structure, binds DNA as a homodimer and as a heterodimer. Can form stable heterodimers with CEBPA, CEBPB and CEBPD. Interacts with GATA1 and SPI1. Interacts with SMARCD2.

The protein localises to the nucleus. Its function is as follows. Transcriptional activator. C/EBP are DNA-binding proteins that recognize two different motifs: the CCAAT homology common to many promoters and the enhanced core homology common to many enhancers. Required for the promyelocyte-myelocyte transition in myeloid differentiation. This Rattus norvegicus (Rat) protein is CCAAT/enhancer-binding protein epsilon (Cebpe).